Reading from the N-terminus, the 89-residue chain is MKDSYISIVIAYLMVTFILVSSMPIEGEKGELGPHRLPCPPEYANYCFNGKCVHFVAQDEPGKPCYSCICDKFYIGKRCGTLDLTNPDF.

An N-terminal signal peptide occupies residues 1 to 30 (MKDSYISIVIAYLMVTFILVSSMPIEGEKG). Intrachain disulfides connect C39/C52, C47/C68, and C70/C79. Positions 43 to 80 (YANYCFNGKCVHFVAQDEPGKPCYSCICDKFYIGKRCG) constitute an EGF-like domain.

This sequence belongs to the EGF domain peptide family. In terms of tissue distribution, expressed by the venom gland.

The protein localises to the secreted. Functionally, ant peptide with probable defensive activity which acts as a potent agonist of the mammalian epidermal growth factor receptor (EGFR). Mimics, both structurally and functionally, vertebrate epidermal growth factor (EGF) peptide hormones. In vivo, intraplantar injection in mice causes long-lasting (several days) hypersensitivity of the injected paw to both mechanical and thermal stimuli. Its long-lasting effect is unusual for venom toxins whose effects are usually immediate. One possible explanation is that it would reduce the duration of a nest attack, discourage future attacks, or enhance the actions of subsequent exposure to other pain-inducing venom peptides. This is OMEGA-ectatommitoxin(02)-Rm1b from Rhytidoponera metallica (Australian green-headed ant).